The following is a 539-amino-acid chain: Probable methionine--tRNA ligase, mitochondrial (539 aa).

The short motif at 28-38 (FYVNAAPHLGH) is the 'HIGH' region element. Positions 326-330 (KMSKS) match the 'KMSKS' region motif. An ATP-binding site is contributed by Lys-329.

This sequence belongs to the class-I aminoacyl-tRNA synthetase family.

The protein localises to the mitochondrion matrix. The enzyme catalyses tRNA(Met) + L-methionine + ATP = L-methionyl-tRNA(Met) + AMP + diphosphate. This is Probable methionine--tRNA ligase, mitochondrial from Schizosaccharomyces pombe (strain 972 / ATCC 24843) (Fission yeast).